The sequence spans 362 residues: Glutamate 5-kinase (362 aa).

K3 is an ATP binding site. Substrate-binding residues include S43, D128, and N140. ATP contacts are provided by residues 160–161 (TD) and 202–208 (TGGMRTK). A PUA domain is found at 267–348 (AGAILVDAGA…REIENVLGYS (82 aa)).

Belongs to the glutamate 5-kinase family.

It localises to the cytoplasm. The catalysed reaction is L-glutamate + ATP = L-glutamyl 5-phosphate + ADP. It functions in the pathway amino-acid biosynthesis; L-proline biosynthesis; L-glutamate 5-semialdehyde from L-glutamate: step 1/2. Catalyzes the transfer of a phosphate group to glutamate to form L-glutamate 5-phosphate. This chain is Glutamate 5-kinase, found in Xanthomonas oryzae pv. oryzae (strain KACC10331 / KXO85).